Reading from the N-terminus, the 932-residue chain is Protein translocase subunit SecA (932 aa).

Residues Gln83, 101–105 (GEGKT), and Asp491 contribute to the ATP site.

The protein belongs to the SecA family. In terms of assembly, monomer and homodimer. Part of the essential Sec protein translocation apparatus which comprises SecA, SecYEG and auxiliary proteins SecDF. Other proteins may also be involved.

The protein localises to the cell inner membrane. It is found in the cellular thylakoid membrane. Its subcellular location is the cytoplasm. The catalysed reaction is ATP + H2O + cellular proteinSide 1 = ADP + phosphate + cellular proteinSide 2.. Part of the Sec protein translocase complex. Interacts with the SecYEG preprotein conducting channel. Has a central role in coupling the hydrolysis of ATP to the transfer of proteins into and across the cell membrane, serving as an ATP-driven molecular motor driving the stepwise translocation of polypeptide chains across the membrane. Functionally, probably participates in protein translocation into and across both the cytoplasmic and thylakoid membranes in cyanobacterial cells. This chain is Protein translocase subunit SecA, found in Cyanothece sp. (strain PCC 7425 / ATCC 29141).